Reading from the N-terminus, the 63-residue chain is Cypmaclein (63 aa).

This sequence belongs to the GASA family. Expressed in pollen (at protein level).

The polypeptide is Cypmaclein (Cupressus sempervirens (Italian cypress)).